The sequence spans 142 residues: Small heat shock protein IbpB (142 aa).

Positions 26–137 (AGESQSFPPY…APQRIAISER (112 aa)) constitute a sHSP domain.

This sequence belongs to the small heat shock protein (HSP20) family. In terms of assembly, homodimer. Forms homomultimers of about 100-150 subunits at optimal growth temperatures. Conformation changes to oligomers at high temperatures or high ionic concentrations. The decrease in size of the multimers is accompanied by an increase in chaperone activity.

The protein localises to the cytoplasm. Associates with aggregated proteins, together with IbpA, to stabilize and protect them from irreversible denaturation and extensive proteolysis during heat shock and oxidative stress. Aggregated proteins bound to the IbpAB complex are more efficiently refolded and reactivated by the ATP-dependent chaperone systems ClpB and DnaK/DnaJ/GrpE. Its activity is ATP-independent. The protein is Small heat shock protein IbpB of Klebsiella pneumoniae subsp. pneumoniae (strain ATCC 700721 / MGH 78578).